The sequence spans 507 residues: 2,3-bisphosphoglycerate-independent phosphoglycerate mutase (507 aa).

Mn(2+)-binding residues include D11 and S61. The active-site Phosphoserine intermediate is the S61. Substrate contacts are provided by residues H122, 152–153 (RD), R183, R189, 258–261 (RNDR), and K332. Mn(2+) contacts are provided by D399, H403, D440, H441, and H458.

This sequence belongs to the BPG-independent phosphoglycerate mutase family. In terms of assembly, monomer. Mn(2+) serves as cofactor.

The enzyme catalyses (2R)-2-phosphoglycerate = (2R)-3-phosphoglycerate. Its pathway is carbohydrate degradation; glycolysis; pyruvate from D-glyceraldehyde 3-phosphate: step 3/5. Catalyzes the interconversion of 2-phosphoglycerate and 3-phosphoglycerate. This chain is 2,3-bisphosphoglycerate-independent phosphoglycerate mutase, found in Parabacteroides distasonis (strain ATCC 8503 / DSM 20701 / CIP 104284 / JCM 5825 / NCTC 11152).